The chain runs to 4244 residues: Tenascin-X (4244 aa).

The first 23 residues, 1 to 23 (MMPAQYALTSSLVLLVLLSTARA), serve as a signal peptide directing secretion. The tract at residues 27 to 57 (SSRSNVTLPAPRPPPQPGGHTVGAGVGSPSS) is disordered. N31 carries an N-linked (GlcNAc...) asparagine glycan. Positions 156-168 (CSCEPGWGGPTCS) constitute an EGF-like 1; incomplete domain. Residues 169 to 189 (DPTDAEIPPSSPPSASGSCPD) form a disordered region. EGF-like domains lie at 183–213 (ASGS…GPSC), 214–244 (GWPS…GPDC), 245–275 (SQRS…GDDC), 276–306 (GMRS…GEDC), 307–337 (GVRS…GEDC), 338–368 (GTRS…GEDC), 369–399 (STRT…GDDC), 400–430 (GVRS…GTDC), 431–461 (GSRA…GEDC), 462–492 (GVRS…GRDC), 493–523 (GTRA…GEDC), 524–554 (GSRR…GEDC), 555–585 (STRS…GEDC), 586–616 (GVRQ…SEDC), 617–647 (SIRT…GPTC), 648–679 (ATRM…EDCG), 684–714 (PASA…GPDC), and 715–746 (AIQT…EDCG). Disulfide bonds link C187–C197, C191–C202, C204–C213, C218–C228, C222–C233, C235–C244, C249–C259, C253–C264, C266–C275, C280–C290, C284–C295, C297–C306, C311–C321, C315–C326, C328–C337, C342–C352, C346–C357, C359–C368, C373–C383, C377–C388, C390–C399, C404–C414, C408–C419, C421–C430, C435–C445, C439–C450, C452–C461, C466–C476, C470–C481, C483–C492, C497–C507, C501–C512, C514–C523, C528–C538, C532–C543, C545–C554, C559–C569, C563–C574, C576–C585, C590–C600, C594–C605, C607–C616, C621–C631, C625–C636, C638–C647, C652–C662, C656–C667, C669–C678, C688–C698, C692–C703, C705–C714, C719–C729, C723–C734, and C736–C745. The segment at 926–956 (TGSSPLGLLGTTDEPPPSGPSTTQGAQAPLL) is disordered. Fibronectin type-III domains are found at residues 959-1051 (RPQE…IMDK), 1064-1153 (RLGE…PQSD), 1161-1249 (HLGN…APER), 1263-1352 (LLGE…PQED), 1374-1468 (LLGE…TPPA), 1476-1572 (RLGE…TEAS), 1574-1669 (PPLE…RGDA), 1674-1764 (PPRL…ARSA), 1778-1868 (LGEE…REET), and 1883-1971 (HLGE…VPEE). Residues 1340–1372 (PESVVAKTAPQEDVDETPSPTELGTEAPESPEE) form a disordered region. The short motif at 1666–1668 (RGD) is the Cell attachment site element. A disordered region spans residues 1752–1777 (PLTADGTTEARSAMDDTGTKRPPKPR). The tract at residues 1968–1990 (VPEEEKPSEPPTATPEPPIKPRL) is disordered. Positions 1976-1987 (EPPTATPEPPIK) are enriched in pro residues. 5 Fibronectin type-III domains span residues 1989-2089 (RLGE…SMEA), 2097-2185 (LLGE…APEE), 2196-2296 (RLGQ…TEPP), 2305-2398 (RLEE…TPSP), and 2408-2502 (PPEE…PQED). The tract at residues 2281 to 2304 (APGKDEEMAPASTEPPTPEPPIKP) is disordered. Residues 2495 to 2542 (GVTAPQEDVDETPSPTEPGTEAPGPPEEPLLGELTVTGSSPDSLSLSW) are disordered. Residues 2506 to 2516 (TPSPTEPGTEA) show a composition bias toward low complexity. Fibronectin type-III domains are found at residues 2519-2617 (PPEE…TTQA), 2625-2723 (PPIK…TPSP), 2733-2840 (PPEE…TTPE), 2841-2939 (PPNK…TPAP), 2949-3042 (PPEE…APKD), 3062-3153 (RLGE…TPSP), 3168-3260 (LLGE…TPLP), 3264-3355 (RLGE…TKPS), 3357-3446 (RLGE…PLEK), 3451-3544 (HLGE…TPAP), 3553-3647 (PPEE…LAPA), 3657-3754 (RLSQ…TLSP), 3758-3847 (SPRD…VPDG), 3848-3934 (PTQL…TGLE), and 3935-4025 (APRD…LRIP). Over residues 2530–2542 (VTGSSPDSLSLSW) the composition is skewed to polar residues. Disordered stretches follow at residues 2824–2847 (PEDE…KPRL) and 2933–2969 (EEET…DSLS). Residues 2937-2946 (PAPTEPSTEA) are compositionally biased toward low complexity. Residues 2960–2969 (VTGSSPDSLS) show a composition bias toward polar residues. Disordered stretches follow at residues 3536–3559 (APEE…EPRL) and 3636–3662 (LSAE…SQLS). N3855, N3908, and N3920 each carry an N-linked (GlcNAc...) asparagine glycan. Residues 4021-4236 (GLRIPFPRDC…FTEMKLRPRN (216 aa)) form the Fibrinogen C-terminal domain. A disulfide bridge connects residues C4030 and C4060. Residue N4095 is glycosylated (N-linked (GlcNAc...) asparagine). C4182 and C4195 form a disulfide bridge.

The protein belongs to the tenascin family. In terms of assembly, homotrimer. Interacts with type I, III and V collagens and tropoelastin via its 29th fibronectin type-III domain. In terms of tissue distribution, highly expressed in fetal adrenal, in fetal testis, fetal smooth, striated and cardiac muscle. Isoform XB-short is only expressed in the adrenal gland.

It is found in the secreted. Its subcellular location is the extracellular space. The protein localises to the extracellular matrix. In terms of biological role, appears to mediate interactions between cells and the extracellular matrix. Substrate-adhesion molecule that appears to inhibit cell migration. Accelerates collagen fibril formation. May play a role in supporting the growth of epithelial tumors. The polypeptide is Tenascin-X (Homo sapiens (Human)).